The sequence spans 901 residues: Protein translocase subunit SecA (901 aa).

ATP contacts are provided by residues Gln-85, Gly-103 to Thr-107, and Asp-510. The interval Thr-847–Gln-901 is disordered. The span at Arg-848 to Ser-866 shows a compositional bias: polar residues. Residues Cys-882, Cys-884, Cys-893, and His-894 each contribute to the Zn(2+) site. Residues Lys-888 to Gln-901 show a composition bias toward basic residues.

This sequence belongs to the SecA family. Monomer and homodimer. Part of the essential Sec protein translocation apparatus which comprises SecA, SecYEG and auxiliary proteins SecDF-YajC and YidC. It depends on Zn(2+) as a cofactor.

It is found in the cell inner membrane. The protein localises to the cytoplasm. The catalysed reaction is ATP + H2O + cellular proteinSide 1 = ADP + phosphate + cellular proteinSide 2.. Its function is as follows. Part of the Sec protein translocase complex. Interacts with the SecYEG preprotein conducting channel. Has a central role in coupling the hydrolysis of ATP to the transfer of proteins into and across the cell membrane, serving both as a receptor for the preprotein-SecB complex and as an ATP-driven molecular motor driving the stepwise translocation of polypeptide chains across the membrane. This chain is Protein translocase subunit SecA, found in Haemophilus influenzae (strain PittGG).